A 233-amino-acid polypeptide reads, in one-letter code: MLHSPVFPAFGHHLADYPAMPLATDLPRTPKSSFNIDSILSRTDRPASKVSMEMPSWQPPSPPFHYSYGMVPYPPMWLIKPTVGYPNMAQAQPMRMPRGECLCPDPACKHRGLSYSHCPNGALNPLSWRTGPCKLKRIRTVFTPEQLERLEKEFLKQQYMVGTERVDLASTLNLTETQVKVWFQNRRIKWRKQSLEQKKAKLSQFGVILADSSDHTDDSRETEEEEDDVDVEL.

Residues 135-194 (LKRIRTVFTPEQLERLEKEFLKQQYMVGTERVDLASTLNLTETQVKVWFQNRRIKWRKQS) constitute a DNA-binding region (homeobox). A disordered region spans residues 212-233 (SSDHTDDSRETEEEEDDVDVEL). The segment covering 220 to 233 (RETEEEEDDVDVEL) has biased composition (acidic residues).

Localized to the dorsal lip of the blastopore (Spemann organizer) during early gastrulation, after which expression continues in tissues derived from the organizer. Expressed in the notochord during mid-gastrulation, the chordoneural hinge, notochord and ventral spinal cord of the tailbud at stage 22, and finally the tip of the tail in the tadpole (stage 35).

The protein resides in the nucleus. In terms of biological role, transcriptional repressor. Plays a fundamental role in notochord formation, acting within the mesodermal region. Acts downstream of gsc and upstream of chrd and foxa4-A/pintallavis. This chain is Homeobox protein not2, found in Xenopus laevis (African clawed frog).